The sequence spans 240 residues: Large ribosomal subunit protein bL25 (240 aa).

Residues 1-24 (MATVMEFKATARPKSGKGAARAER) form a disordered region.

It belongs to the bacterial ribosomal protein bL25 family. CTC subfamily. As to quaternary structure, part of the 50S ribosomal subunit; part of the 5S rRNA/L5/L18/L25 subcomplex. Contacts the 5S rRNA. Binds to the 5S rRNA independently of L5 and L18.

Functionally, this is one of the proteins that binds to the 5S RNA in the ribosome where it forms part of the central protuberance. In Rhodopseudomonas palustris (strain HaA2), this protein is Large ribosomal subunit protein bL25.